Consider the following 299-residue polypeptide: Xyloglucan endotransglucosylase protein 6 (299 aa).

The signal sequence occupies residues M1–G25. The GH16 domain maps to G26–Y219. The Nucleophile role is filled by E105. E109 serves as the catalytic Proton donor. E109 is a binding site for xyloglucan. N-linked (GlcNAc...) asparagine glycosylation is present at N113. Xyloglucan contacts are provided by residues Q122–N124, N132–E134, D198–W199, and G203. 2 cysteine pairs are disulfide-bonded: C227–C242 and C281–C294. R286 lines the xyloglucan pocket.

It belongs to the glycosyl hydrolase 16 family. XTH group 1 subfamily. Contains at least one intrachain disulfide bond essential for its enzymatic activity. In terms of tissue distribution, highest expression in ripe leaves after full expansion. Also expressed in fruits, and at a lower level in flowers and stems (picked at anthesis).

The protein localises to the secreted. The protein resides in the cell wall. It localises to the extracellular space. Its subcellular location is the apoplast. It catalyses the reaction breaks a beta-(1-&gt;4) bond in the backbone of a xyloglucan and transfers the xyloglucanyl segment on to O-4 of the non-reducing terminal glucose residue of an acceptor, which can be a xyloglucan or an oligosaccharide of xyloglucan.. In terms of biological role, catalyzes xyloglucan endotransglycosylation (XET). Cleaves and religates xyloglucan polymers. Does not catalyze xyloglucan endohydrolysis (XEH). Probably involved in cell wall restructuring during postharvest fruit softening. This Diospyros kaki (Kaki persimmon) protein is Xyloglucan endotransglucosylase protein 6.